A 164-amino-acid chain; its full sequence is Ubiquitin-fold modifier-conjugating enzyme 1 (164 aa).

The active-site Glycyl thioester intermediate is the C116.

It belongs to the ubiquitin-conjugating enzyme family. UFC1 subfamily.

In terms of biological role, E2-like enzyme which forms an intermediate with UFM1 via a thioester linkage. This is Ubiquitin-fold modifier-conjugating enzyme 1 from Drosophila sechellia (Fruit fly).